Consider the following 570-residue polypeptide: Formate--tetrahydrofolate ligase (570 aa).

Position 65–72 (T65–T72) interacts with ATP.

The protein belongs to the formate--tetrahydrofolate ligase family.

The catalysed reaction is (6S)-5,6,7,8-tetrahydrofolate + formate + ATP = (6R)-10-formyltetrahydrofolate + ADP + phosphate. Its pathway is one-carbon metabolism; tetrahydrofolate interconversion. This is Formate--tetrahydrofolate ligase from Shewanella sp. (strain ANA-3).